A 67-amino-acid chain; its full sequence is Beta-defensin 103A (67 aa).

The signal sequence occupies residues Met-1–Gly-22. Intrachain disulfides connect Cys-33/Cys-62, Cys-40/Cys-55, and Cys-45/Cys-63.

The protein belongs to the beta-defensin family.

The protein resides in the secreted. Functionally, exhibits antimicrobial activity against Gram-positive and Gram-negative bacteria. The chain is Beta-defensin 103A (DEFB103A) from Equus caballus (Horse).